The following is a 183-amino-acid chain: Large ribosomal subunit protein uL5 (183 aa).

Belongs to the universal ribosomal protein uL5 family. In terms of assembly, part of the 50S ribosomal subunit; part of the 5S rRNA/L5/L18/L25 subcomplex. Contacts the 5S rRNA and the P site tRNA. Forms a bridge to the 30S subunit in the 70S ribosome.

Functionally, this is one of the proteins that bind and probably mediate the attachment of the 5S RNA into the large ribosomal subunit, where it forms part of the central protuberance. In the 70S ribosome it contacts protein S13 of the 30S subunit (bridge B1b), connecting the 2 subunits; this bridge is implicated in subunit movement. Contacts the P site tRNA; the 5S rRNA and some of its associated proteins might help stabilize positioning of ribosome-bound tRNAs. The sequence is that of Large ribosomal subunit protein uL5 from Kosmotoga olearia (strain ATCC BAA-1733 / DSM 21960 / TBF 19.5.1).